We begin with the raw amino-acid sequence, 147 residues long: F420H(2)-dependent reductase Rv1155 (147 aa).

Coenzyme F420-(gamma-Glu)n contacts are provided by residues Q32, Q37, S50, 56–60 (AKTRN), 77–79 (WSY), and H138.

The protein belongs to the F420H(2)-dependent biliverdin reductase family. Homodimer.

Functionally, F420H(2)-dependent reductase able to catalyze the reduction of biliverdin-IXalpha to bilirubin-IXalpha in vitro. However, kinetic parameters show that it is less efficient than the biliverdin reductase Rv2074 and suggest biliverdin-IXalpha is unlikely to be the native substrate of Rv1155, which probably catalyzes the reduction of an alternative molecule in vivo. Binds coenzyme F420, but does not bind FMN or other flavins. Cannot use pyridoxine 5'-phosphate, pyridoxamine 5'-phosphate, pyridoxal 5'-phosphate (PLP), the anti-tuberculosis drug PA-824 or aflatoxin analogs as substrates. The chain is F420H(2)-dependent reductase Rv1155 from Mycobacterium tuberculosis (strain ATCC 25618 / H37Rv).